The sequence spans 197 residues: Phosphoheptose isomerase (197 aa).

The SIS domain maps to 34 to 196 (MVHCLLGGNK…DRTLFPQDEQ (163 aa)). 49 to 51 (NGG) lines the substrate pocket. Positions 58 and 62 each coordinate Zn(2+). Substrate-binding positions include Glu-62, 91–92 (ND), 117–119 (STS), Ser-122, and Gln-172. Zn(2+) is bound by residues Gln-172 and His-180.

It belongs to the SIS family. GmhA subfamily. In terms of assembly, homotetramer. Zn(2+) serves as cofactor.

The protein resides in the cytoplasm. The enzyme catalyses 2 D-sedoheptulose 7-phosphate = D-glycero-alpha-D-manno-heptose 7-phosphate + D-glycero-beta-D-manno-heptose 7-phosphate. It participates in carbohydrate biosynthesis; D-glycero-D-manno-heptose 7-phosphate biosynthesis; D-glycero-alpha-D-manno-heptose 7-phosphate and D-glycero-beta-D-manno-heptose 7-phosphate from sedoheptulose 7-phosphate: step 1/1. Catalyzes the isomerization of sedoheptulose 7-phosphate in D-glycero-D-manno-heptose 7-phosphate. This is Phosphoheptose isomerase from Shewanella baltica (strain OS223).